Consider the following 129-residue polypeptide: MSNVPAELKYSKEHEWLRKEADGTYTVGITEHAQELLGDMVFVDLPEVGATVSAGDDCAVAESVKAASDIYAPVSGEIVAVNDALSDSPELVNSEPYVGGWIFKIKASDESELESLLDATAYEALLEDE.

The Lipoyl-binding domain occupies 24–106 (TYTVGITEHA…YVGGWIFKIK (83 aa)). At lysine 65 the chain carries N6-lipoyllysine.

The protein belongs to the GcvH family. In terms of assembly, the glycine cleavage system is composed of four proteins: P, T, L and H. Requires (R)-lipoate as cofactor.

In terms of biological role, the glycine cleavage system catalyzes the degradation of glycine. The H protein shuttles the methylamine group of glycine from the P protein to the T protein. In Salmonella paratyphi B (strain ATCC BAA-1250 / SPB7), this protein is Glycine cleavage system H protein.